We begin with the raw amino-acid sequence, 471 residues long: Plasmepsin VII (471 aa).

Positions 1 to 24 (MKSVYHHFAIIFFLKLFLCNCILS) are cleaved as a signal peptide. The region spanning 96 to 438 (YYGKIAIGEN…DKDNLQIGFV (343 aa)) is the Peptidase A1 domain. Residues Asp-115 and Asp-325 contribute to the active site.

This sequence belongs to the peptidase A1 family.

The protein localises to the cytoplasm. This chain is Plasmepsin VII, found in Plasmodium berghei (strain Anka).